Here is a 330-residue protein sequence, read N- to C-terminus: Lipoyl synthase (330 aa).

The [4Fe-4S] cluster site is built by C77, C82, C88, C103, C107, C110, and S317. In terms of domain architecture, Radical SAM core spans 89 to 306; that stretch reads FNHGTATFMI…RSEAERMGFE (218 aa).

The protein belongs to the radical SAM superfamily. Lipoyl synthase family. The cofactor is [4Fe-4S] cluster.

It localises to the cytoplasm. It catalyses the reaction [[Fe-S] cluster scaffold protein carrying a second [4Fe-4S](2+) cluster] + N(6)-octanoyl-L-lysyl-[protein] + 2 oxidized [2Fe-2S]-[ferredoxin] + 2 S-adenosyl-L-methionine + 4 H(+) = [[Fe-S] cluster scaffold protein] + N(6)-[(R)-dihydrolipoyl]-L-lysyl-[protein] + 4 Fe(3+) + 2 hydrogen sulfide + 2 5'-deoxyadenosine + 2 L-methionine + 2 reduced [2Fe-2S]-[ferredoxin]. The protein operates within protein modification; protein lipoylation via endogenous pathway; protein N(6)-(lipoyl)lysine from octanoyl-[acyl-carrier-protein]: step 2/2. Its function is as follows. Catalyzes the radical-mediated insertion of two sulfur atoms into the C-6 and C-8 positions of the octanoyl moiety bound to the lipoyl domains of lipoate-dependent enzymes, thereby converting the octanoylated domains into lipoylated derivatives. The protein is Lipoyl synthase of Actinobacillus pleuropneumoniae serotype 3 (strain JL03).